A 1257-amino-acid polypeptide reads, in one-letter code: Phosphatidylinositol 3,4,5-trisphosphate 5-phosphatase 2 (1257 aa).

An SH2 domain is found at 21–117; it reads WYHRDLSRAA…GLVCALLLPV (97 aa). A compositionally biased stretch (basic and acidic residues) spans 119–132; sequence GEREPDPPDDRDAS. The interval 119–181 is disordered; the sequence is GEREPDPPDD…ESTPNGLSTV (63 aa). The residue at position 132 (S132) is a Phosphoserine. Residues 156-166 are compositionally biased toward pro residues; the sequence is PSSPLPTPETP. T165 bears the Phosphothreonine mark. A phosphoserine mark is found at S241 and S353. Y887 is subject to Phosphotyrosine. S891 carries the phosphoserine modification. A disordered region spans residues 897–986; it reads TGAKSKVPSV…PPKNSFNNPA (90 aa). A compositionally biased stretch (pro residues) spans 939–951; that stretch reads PPPTGRPPAPPRA. The SH3-binding motif lies at 945–950; that stretch reads PPAPPR. The span at 952–966 shows a compositional bias: basic and acidic residues; sequence VPREEPLNPRLKSEG. The short motif at 984 to 987 is the NPXY motif element; the sequence is NPAY. A Phosphotyrosine modification is found at Y987. The span at 999-1008 shows a compositional bias: low complexity; the sequence is PLEPPSLARA. The disordered stretch occupies residues 999–1119; the sequence is PLEPPSLARA…FLGEVASGDD (121 aa). Composition is skewed to pro residues over residues 1049–1060 and 1088–1104; these read LPPPDFPPPPLP and GPPP…PPGT. At S1132 the chain carries Phosphoserine. Residues 1134-1196 are disordered; it reads VDYAPGPGRS…PQGGRASGLG (63 aa). 2 positions are modified to phosphotyrosine: Y1136 and Y1161. Residues 1195–1257 form the SAM domain; it reads LGEAGMGAWL…LLLDTLQLSK (63 aa). The residue at position 1256 (S1256) is a Phosphoserine.

Belongs to the inositol 1,4,5-trisphosphate 5-phosphatase family. In terms of assembly, interacts with tyrosine phosphorylated form of SHC1. Interacts with EGFR. Upon stimulation by the EGF signaling pathway, it forms a complex with SHC1 and EGFR. Interacts with cytoskeletal protein SORBS3/vinexin, promoting its localization to the periphery of cells. Forms a complex with filamin (FLNA or FLNB), actin, GPIb (GP1BA or GP1BB) that regulates cortical and submembraneous actin. Interacts with c-Met/MET, when c-Met/MET is phosphorylated on 'Tyr-1356'. Interacts with p130Cas/BCAR1. Interacts with CENTD3/ARAP3 via its SAM domain. Interacts with c-Cbl/CBL and CAP/SORBS1. Interacts with activated EPHA2 receptor. Interacts with receptors FCGR2A. Interacts with FCGR2B. Interacts with tyrosine kinase ABL1. Interacts with tyrosine kinase TEC. Interacts with CSF1R. Interacts (via N-terminus) with SH3YL1 (via SH3 domain). Interacts (via SH2 domain) with tyrosine phosphorylated KLRC1 (via ITIM). Interacts with NEDD9/HEF1. In terms of processing, tyrosine phosphorylated by the members of the SRC family after exposure to a diverse array of extracellular stimuli such as insulin, growth factors such as EGF or PDGF, chemokines, integrin ligands and hypertonic and oxidative stress. May be phosphorylated upon IgG receptor FCGR2B-binding. Phosphorylated at Tyr-987 following cell attachment and spreading. Phosphorylated at Tyr-1161 following EGF signaling pathway stimulation. Widely expressed.

The protein localises to the cytoplasm. The protein resides in the cytosol. It localises to the cytoskeleton. Its subcellular location is the membrane. It is found in the cell projection. The protein localises to the filopodium. The protein resides in the lamellipodium. It localises to the basal cell membrane. Its subcellular location is the nucleus. It is found in the nucleus speckle. The protein localises to the spindle pole. The enzyme catalyses a 1,2-diacyl-sn-glycero-3-phospho-(1D-myo-inositol-3,4,5-trisphosphate) + H2O = a 1,2-diacyl-sn-glycero-3-phospho-(1D-myo-inositol-3,4-bisphosphate) + phosphate. The catalysed reaction is 1,2-dioctanoyl-sn-glycero-3-phospho-(1D-myo-inositol-3,4,5-trisphosphate) + H2O = 1,2-dioctanoyl-sn-glycero-3-phospho-(1D-myo-inositol-3,4-bisphosphate) + phosphate. It carries out the reaction 1,2-dihexadecanoyl-sn-glycero-3-phospho-(1D-myo-inositol-3,4,5-trisphosphate) + H2O = 1,2-dihexadecanoyl-sn-glycero-3-phospho-(1D-myo-inositol-3,4-bisphosphate) + phosphate. With respect to regulation, activated upon translocation to the sites of synthesis of PtdIns(3,4,5)P3 in the membrane. Enzymatic activity is enhanced in the presence of phosphatidylserine. In terms of biological role, phosphatidylinositol (PtdIns) phosphatase that specifically hydrolyzes the 5-phosphate of phosphatidylinositol-3,4,5-trisphosphate (PtdIns(3,4,5)P3) to produce PtdIns(3,4)P2, thereby negatively regulating the PI3K (phosphoinositide 3-kinase) pathways. Required for correct mitotic spindle orientation and therefore progression of mitosis. Plays a central role in regulation of PI3K-dependent insulin signaling, although the precise molecular mechanisms and signaling pathways remain unclear. While overexpression reduces both insulin-stimulated MAP kinase and Akt activation, its absence does not affect insulin signaling or GLUT4 trafficking. Confers resistance to dietary obesity. May act by regulating AKT2, but not AKT1, phosphorylation at the plasma membrane. Part of a signaling pathway that regulates actin cytoskeleton remodeling. Required for the maintenance and dynamic remodeling of actin structures as well as in endocytosis, having a major impact on ligand-induced EGFR internalization and degradation. Participates in regulation of cortical and submembraneous actin by hydrolyzing PtdIns(3,4,5)P3 thereby regulating membrane ruffling. Regulates cell adhesion and cell spreading. Required for HGF-mediated lamellipodium formation, cell scattering and spreading. Acts as a negative regulator of EPHA2 receptor endocytosis by inhibiting via PI3K-dependent Rac1 activation. Acts as a regulator of neuritogenesis by regulating PtdIns(3,4,5)P3 level and is required to form an initial protrusive pattern, and later, maintain proper neurite outgrowth. Acts as a negative regulator of the FC-gamma-RIIA receptor (FCGR2A). Mediates signaling from the FC-gamma-RIIB receptor (FCGR2B), playing a central role in terminating signal transduction from activating immune/hematopoietic cell receptor systems. Upon stimulation by EGF, it is recruited by EGFR and dephosphorylates PtdIns(3,4,5)P3. Plays a negative role in regulating the PI3K-PKB pathway, possibly by inhibiting PKB activity. Down-regulates Fc-gamma-R-mediated phagocytosis in macrophages independently of INPP5D/SHIP1. In macrophages, down-regulates NF-kappa-B-dependent gene transcription by regulating macrophage colony-stimulating factor (M-CSF)-induced signaling. Plays a role in the localization of AURKA and NEDD9/HEF1 to the basolateral membrane at interphase in polarized cysts, thereby mediates cell cycle homeostasis, cell polarization and cilia assembly. Additionally promotion of cilia growth is also facilitated by hydrolysis of (PtdIns(3,4,5)P3) to PtdIns(3,4)P2. Promotes formation of apical membrane-initiation sites during the initial stages of lumen formation via Rho family-induced actin filament organization and CTNNB1 localization to cell-cell contacts. May also hydrolyze PtdIns(1,3,4,5)P4, and could thus affect the levels of the higher inositol polyphosphates like InsP6. Involved in endochondral ossification. The protein is Phosphatidylinositol 3,4,5-trisphosphate 5-phosphatase 2 of Mus musculus (Mouse).